Reading from the N-terminus, the 73-residue chain is MASNKVSFFLVLCLCVLSTAEFGEAQILTGIKCPDPNGHDKEDKCNIYCLNQNYMGGSCQGYKNHYMCECYVG.

Residues 1–25 (MASNKVSFFLVLCLCVLSTAEFGEA) form the signal peptide. Disulfide bonds link C33/C59, C45/C68, and C49/C70.

This sequence belongs to the DEFL family.

It localises to the secreted. The protein is Defensin-like protein 34 of Arabidopsis thaliana (Mouse-ear cress).